A 1219-amino-acid polypeptide reads, in one-letter code: Disease resistance-like protein DSC1 (1219 aa).

In terms of domain architecture, TIR spans 9–176 (AEFDVFLSFR…EIAVDTFKKL (168 aa)). Glu-83 is an active-site residue. An NB-ARC domain is found at 197–446 (LEKLLSWEDL…DIACFFRSEN (250 aa)). 216–222 (GMVGIGK) provides a ligand contact to ATP. LRR repeat units follow at residues 468–493 (LVDKCLITLSDNRIEMHDMLQTMAKE), 538–563 (TDKIRGIFLDTSKLRAMRLSAKAFQG), 597–619 (PNELTYLHWHGYPLQSIPLDFDP), 620–642 (KNLVDLKLPHSQLEEIWDDEKDV), 665–689 (AHNLERLNLEGCTSLKKLPSTINCL), 690–713 (EKLIYLNLRDCTSLRSLPKGIKTQ), 733–757 (SENVEVLLLDGTVIKSLPESIQTFR), 759–780 (LALLNLKNCKKLKHLSSDLYKL), 804–827 (MESLEILLMDDTSITEMPKMMHLS), 854–877 (CSRLTDLYLSRCSLYKLPDNIGGL), and 878–899 (SSLQSLCLSGNNIENLPESFNQ).

It belongs to the disease resistance NB-LRR family. Interacts with CAMTA3 and DSC2.

The catalysed reaction is NAD(+) + H2O = ADP-D-ribose + nicotinamide + H(+). In terms of biological role, TIR-NB-LRR receptor-like protein involved in plant defense. Acts as a trigger of hypersensitive response (HR). Functions as a guard of CAMTA3, a negative regulator of immunity, during pathogen infection. This Arabidopsis thaliana (Mouse-ear cress) protein is Disease resistance-like protein DSC1.